Consider the following 235-residue polypeptide: H2HPP isomerase (235 aa).

Cupin type-2 domains lie at Val-41–Ile-106 and Lys-151–Asn-216. A divalent metal cation contacts are provided by His-50, His-52, Gln-56, His-91, His-162, His-164, Gln-168, and His-202. Tyr-223 contributes to the substrate binding site.

As to quaternary structure, monomer. Fe(2+) serves as cofactor. The cofactor is Co(2+).

The protein localises to the cytoplasm. The catalysed reaction is 3-[(4R)-4-hydroxycyclohexa-1,5-dien-1-yl]-2-oxopropanoate = 3-[(1E,4R)-4-hydroxycyclohex-2-en-1-ylidene]pyruvate. Its pathway is antibiotic biosynthesis; bacilysin biosynthesis. Part of the bacABCDEF operon responsible for the biosynthesis of the nonribosomally synthesized dipeptide antibiotic bacilysin, composed of L-alanine and L-anticapsin. Bacilysin is an irreversible inactivator of the glutaminase domain of glucosamine synthetase. BacB catalyzes the allylic isomerization of the endocyclic-delta(4),delta(8)-7R-dihydro-hydroxyphenylpyruvate (en-H2HPP) to generate a mixture of 3E,7R- and 3Z, 7R-olefins (E/Z ration of 3/1) of the exocyclic-delta(3),delta(5)-dihydro-hydroxyphenylpyruvate (ex-H2HPP). The protein is H2HPP isomerase of Bacillus subtilis (strain 168).